The primary structure comprises 94 residues: Protein RnfH (94 aa).

The protein belongs to the UPF0125 (RnfH) family.

In Serratia proteamaculans (strain 568), this protein is Protein RnfH.